The primary structure comprises 49 residues: Small, acid-soluble spore protein O (49 aa).

The disordered stretch occupies residues 1-49 (MGKRKANHTISGMNVASAQGQGTGYNEEFANEPLTPAERQNNKKRKKNQ). Polar residues predominate over residues 8–20 (HTISGMNVASAQG).

Belongs to the SspO family.

The protein localises to the spore core. The chain is Small, acid-soluble spore protein O from Bacillus cereus (strain G9842).